A 426-amino-acid polypeptide reads, in one-letter code: Glucose-1-phosphate adenylyltransferase (426 aa).

Alpha-D-glucose 1-phosphate-binding positions include G165, 180-181, and S191; that span reads EK.

It belongs to the bacterial/plant glucose-1-phosphate adenylyltransferase family. Homotetramer.

It catalyses the reaction alpha-D-glucose 1-phosphate + ATP + H(+) = ADP-alpha-D-glucose + diphosphate. The protein operates within glycan biosynthesis; glycogen biosynthesis. Its function is as follows. Involved in the biosynthesis of ADP-glucose, a building block required for the elongation reactions to produce glycogen. Catalyzes the reaction between ATP and alpha-D-glucose 1-phosphate (G1P) to produce pyrophosphate and ADP-Glc. This is Glucose-1-phosphate adenylyltransferase from Ruminiclostridium cellulolyticum (strain ATCC 35319 / DSM 5812 / JCM 6584 / H10) (Clostridium cellulolyticum).